We begin with the raw amino-acid sequence, 229 residues long: Cytidylate kinase (229 aa).

An ATP-binding site is contributed by Gly12–Thr20.

Belongs to the cytidylate kinase family. Type 1 subfamily.

The protein localises to the cytoplasm. The enzyme catalyses CMP + ATP = CDP + ADP. It carries out the reaction dCMP + ATP = dCDP + ADP. The sequence is that of Cytidylate kinase from Pseudomonas fluorescens (strain SBW25).